A 250-amino-acid polypeptide reads, in one-letter code: Cell division protein ZapD (250 aa).

The protein belongs to the ZapD family. As to quaternary structure, interacts with FtsZ.

It is found in the cytoplasm. In terms of biological role, cell division factor that enhances FtsZ-ring assembly. Directly interacts with FtsZ and promotes bundling of FtsZ protofilaments, with a reduction in FtsZ GTPase activity. The polypeptide is Cell division protein ZapD (Serratia proteamaculans (strain 568)).